Here is a 95-residue protein sequence, read N- to C-terminus: MLKPLGNRVIIERKEQEQTTKSGIVLTDSAKEKSNEGIVVAVGTGRVLDNGEKVAPEVKEGDRVVFQEYAGSEVKRGDKTYLILNVEDLLAIIED.

This sequence belongs to the GroES chaperonin family. Heptamer of 7 subunits arranged in a ring. Interacts with the chaperonin GroEL.

It is found in the cytoplasm. Together with the chaperonin GroEL, plays an essential role in assisting protein folding. The GroEL-GroES system forms a nano-cage that allows encapsulation of the non-native substrate proteins and provides a physical environment optimized to promote and accelerate protein folding. GroES binds to the apical surface of the GroEL ring, thereby capping the opening of the GroEL channel. In Staphylococcus haemolyticus (strain JCSC1435), this protein is Co-chaperonin GroES.